An 85-amino-acid polypeptide reads, in one-letter code: UPF0297 protein CPR_1749 (85 aa).

The protein belongs to the UPF0297 family.

This chain is UPF0297 protein CPR_1749, found in Clostridium perfringens (strain SM101 / Type A).